A 130-amino-acid polypeptide reads, in one-letter code: uncharacterized protein (130 aa).

Residues 41 to 64 are disordered; it reads DDKDDHMDNQPKTSQTSKKVKLSE.

This is an uncharacterized protein from Streptococcus pyogenes serotype M6 (strain ATCC BAA-946 / MGAS10394).